A 635-amino-acid chain; its full sequence is DNA mismatch repair protein MutL (635 aa).

The disordered stretch occupies residues G359 to Y399. Residues A364 to A377 are compositionally biased toward low complexity. Positions V378 to Y399 are enriched in basic and acidic residues.

The protein belongs to the DNA mismatch repair MutL/HexB family.

Functionally, this protein is involved in the repair of mismatches in DNA. It is required for dam-dependent methyl-directed DNA mismatch repair. May act as a 'molecular matchmaker', a protein that promotes the formation of a stable complex between two or more DNA-binding proteins in an ATP-dependent manner without itself being part of a final effector complex. This chain is DNA mismatch repair protein MutL, found in Yersinia pestis bv. Antiqua (strain Antiqua).